Consider the following 170-residue polypeptide: Bifunctional protein PyrR (170 aa).

The PRPP-binding motif lies at 90–102; the sequence is LVLIDDVLMSGRT.

This sequence belongs to the purine/pyrimidine phosphoribosyltransferase family. PyrR subfamily.

The enzyme catalyses UMP + diphosphate = 5-phospho-alpha-D-ribose 1-diphosphate + uracil. In terms of biological role, regulates the transcription of the pyrimidine nucleotide (pyr) operon in response to exogenous pyrimidines. Functionally, also displays a weak uracil phosphoribosyltransferase activity which is not physiologically significant. This Pseudomonas syringae pv. syringae (strain B728a) protein is Bifunctional protein PyrR.